Reading from the N-terminus, the 307-residue chain is Cyclin-dependent kinase 5 activator 1 (307 aa).

Gly2 carries the N-myristoyl glycine lipid modification. A Phosphoserine; by CDK5 modification is found at Ser8. The tract at residues 97-136 is disordered; it reads TFAQPPPAQPPAPPASQLSGSQTGGSSSVKKAPHPAVTSA. Positions 100–110 are enriched in pro residues; the sequence is QPPPAQPPAPP. Residues 111–124 show a composition bias toward low complexity; it reads ASQLSGSQTGGSSS. A Phosphothreonine; by CDK5 modification is found at Thr138.

Belongs to the cyclin-dependent kinase 5 activator family. In terms of assembly, heterodimer composed of a catalytic subunit CDK5 and a regulatory subunit CDK5R1 (p25) and macromolecular complex composed of at least CDK5, CDK5R1 (p35) and CDK5RAP1 or CDK5RAP2 or CDK5RAP3. Only the heterodimer shows kinase activity. Interacts with EPHA4 and NGEF; may mediate the activation of NGEF by EPHA4. Interacts with RASGRF2. The complex p35/CDK5 interacts with CLOCK. In terms of processing, the p35 form is proteolytically cleaved by calpain, giving rise to the p25 form. P35 has a 5 to 10 fold shorter half-life compared to p25. The conversion results in deregulation of the CDK5 kinase: p25/CDK5 kinase displays an increased and altered tau phosphorylation in comparison to the p35/CDK5 kinase in vivo. Myristoylated. A proper myristoylation signal is essential for the proper distribution of p35. Post-translationally, ubiquitinated, leading to its degradation: degradation of p35 by proteasome results in down-regulation of CDK5 activity. During this process, CDK5 phosphorylates p35 and induces its ubiquitination and subsequent degradation. Ubiquitinated by the CRL2(FEM1B) complex, which recognizes the -Gly-Leu-Asp-Arg C-degron at the C-terminus, leading to its degradation. In terms of processing, phosphorylation at Ser-8 and Thr-138 by CDK5 prevents calpain-mediated proteolysis. Brain and neuron specific.

The protein resides in the cell membrane. It is found in the cell projection. The protein localises to the neuron projection. Its subcellular location is the nucleus. It localises to the cytoplasm. The protein resides in the perinuclear region. It is found in the perikaryon. Functionally, p35 is a neuron specific activator of CDK5. The complex p35/CDK5 is required for neurite outgrowth and cortical lamination. Involved in dendritic spine morphogenesis by mediating the EFNA1-EPHA4 signaling. Activator of TPKII. The complex p35/CDK5 participates in the regulation of the circadian clock by modulating the function of CLOCK protein: phosphorylates CLOCK at 'Thr-451' and 'Thr-461' and regulates the transcriptional activity of the CLOCK-BMAL1 heterodimer in association with altered stability and subcellular distribution. This Homo sapiens (Human) protein is Cyclin-dependent kinase 5 activator 1 (CDK5R1).